Here is a 338-residue protein sequence, read N- to C-terminus: Glutamate/glutamine/aspartate/asparagine-binding protein BztA (338 aa).

The first 22 residues, 1–22 (MKKSAFFGSVALAALVAGAASA), serve as a signal peptide directing secretion.

This sequence belongs to the bacterial solute-binding protein 3 family.

The protein resides in the periplasm. Functionally, part of a binding-protein-dependent transport system for glutamate, glutamine, aspartate and asparagine. In Rhodobacter capsulatus (strain ATCC BAA-309 / NBRC 16581 / SB1003), this protein is Glutamate/glutamine/aspartate/asparagine-binding protein BztA (bztA).